A 134-amino-acid chain; its full sequence is Small ribosomal subunit protein uS8 (134 aa).

Belongs to the universal ribosomal protein uS8 family. In terms of assembly, part of the 30S ribosomal subunit. Contacts proteins S5 and S12.

Its function is as follows. One of the primary rRNA binding proteins, it binds directly to 16S rRNA central domain where it helps coordinate assembly of the platform of the 30S subunit. The sequence is that of Small ribosomal subunit protein uS8 from Thermosipho africanus (strain TCF52B).